We begin with the raw amino-acid sequence, 420 residues long: UDP-N-acetylglucosamine 1-carboxyvinyltransferase 2 (420 aa).

A phosphoenolpyruvate-binding site is contributed by 22–23 (KN). Residue Arg-92 coordinates UDP-N-acetyl-alpha-D-glucosamine. Residue Cys-116 is the Proton donor of the active site. 2-(S-cysteinyl)pyruvic acid O-phosphothioketal is present on Cys-116. Residues 121–125 (RPIDL), Asp-307, and Ile-329 each bind UDP-N-acetyl-alpha-D-glucosamine.

The protein belongs to the EPSP synthase family. MurA subfamily.

The protein localises to the cytoplasm. It catalyses the reaction phosphoenolpyruvate + UDP-N-acetyl-alpha-D-glucosamine = UDP-N-acetyl-3-O-(1-carboxyvinyl)-alpha-D-glucosamine + phosphate. The protein operates within cell wall biogenesis; peptidoglycan biosynthesis. Its function is as follows. Cell wall formation. Adds enolpyruvyl to UDP-N-acetylglucosamine. The chain is UDP-N-acetylglucosamine 1-carboxyvinyltransferase 2 from Streptococcus thermophilus (strain CNRZ 1066).